A 563-amino-acid chain; its full sequence is BOS complex subunit NCLN (563 aa).

Residues 1-42 form the signal peptide; that stretch reads MLEEAGEVLENMLKASCLPLGFIVFLPAVLLLVAPPLPAADA. Over 43–522 the chain is Lumenal; it reads AHEFTVYRMQ…VMNAYRVKPA (480 aa). N-linked (GlcNAc...) asparagine glycans are attached at residues asparagine 241 and asparagine 428. The helical transmembrane segment at 523–543 threads the bilayer; it reads VFDLLLAVGIAAYLGMAYVAV. The Cytoplasmic segment spans residues 544–563; sequence QHFSLLYKTVQRLLVKAKTQ.

It belongs to the nicastrin family. In terms of assembly, component of the back of Sec61 (BOS) complex, composed of NCLN/Nicalin, NOMO (NOMO1, NOMO2 or NOMO3) and TMEM147. The BOS complex is part of the multi-pass translocon (MPT) complex, composed of three subcomplexes, the GEL complex (composed of RAB5IF/OPTI and TMCO1), the BOS complex (composed of NCLN/Nicalin, NOMO and TMEM147) and the PAT complex (composed of WDR83OS/Asterix and CCDC47). The MPT complex associates with the SEC61 complex. As to expression, highly expressed in pancreas and skeletal muscle and, at lower levels, in heart.

It is found in the endoplasmic reticulum membrane. Functionally, component of the multi-pass translocon (MPT) complex that mediates insertion of multi-pass membrane proteins into the lipid bilayer of membranes. The MPT complex takes over after the SEC61 complex: following membrane insertion of the first few transmembrane segments of proteins by the SEC61 complex, the MPT complex occludes the lateral gate of the SEC61 complex to promote insertion of subsequent transmembrane regions. May antagonize Nodal signaling and subsequent organization of axial structures during mesodermal patterning, via its interaction with NOMO. The polypeptide is BOS complex subunit NCLN (Homo sapiens (Human)).